Here is a 444-residue protein sequence, read N- to C-terminus: Acyl-CoA 6-desaturase (444 aa).

The Cytoplasmic segment spans residues M1–V131. One can recognise a Cytochrome b5 heme-binding domain in the interval V18 to A95. Residues F132–F152 traverse the membrane as a helical segment. The Lumenal portion of the chain corresponds to Y153–G157. A helical membrane pass occupies residues W158 to L178. The Cytoplasmic segment spans residues Q179 to E264. A Histidine box-1 motif is present at residues H180–H184. The short motif at H217–H221 is the Histidine box-2 element. The helical transmembrane segment at Y265–M285 threads the bilayer. The Lumenal segment spans residues T286–R305. Residues F306–I326 traverse the membrane as a helical segment. Residues R327 to K444 are Cytoplasmic-facing. A Histidine box-3 motif is present at residues Q382–H386.

This sequence belongs to the fatty acid desaturase type 1 family.

It localises to the endoplasmic reticulum membrane. It carries out the reaction (9Z,12Z)-octadecadienoyl-CoA + 2 Fe(II)-[cytochrome b5] + O2 + 2 H(+) = (6Z,9Z,12Z)-octadecatrienoyl-CoA + 2 Fe(III)-[cytochrome b5] + 2 H2O. It catalyses the reaction (9Z,12Z,15Z)-octadecatrienoyl-CoA + 2 Fe(II)-[cytochrome b5] + O2 + 2 H(+) = (6Z,9Z,12Z,15Z)-octadecatetraenoyl-CoA + 2 Fe(III)-[cytochrome b5] + 2 H2O. The enzyme catalyses (9Z,12Z,15Z,18Z,21Z)-tetracosapentaenoyl-CoA + 2 Fe(II)-[cytochrome b5] + O2 + 2 H(+) = (6Z,9Z,12Z,15Z,18Z,21Z)-tetracosahexaenoyl-CoA + 2 Fe(III)-[cytochrome b5] + 2 H2O. The catalysed reaction is (11E)-octadecenoyl-CoA + 2 Fe(II)-[cytochrome b5] + O2 + 2 H(+) = (6Z,11E)-octadecadienoyl-CoA + 2 Fe(III)-[cytochrome b5] + 2 H2O. It carries out the reaction (11Z,14Z)-eicosadienoyl-CoA + 2 Fe(II)-[cytochrome b5] + O2 + 2 H(+) = (8Z,11Z,14Z)-eicosatrienoyl-CoA + 2 Fe(III)-[cytochrome b5] + 2 H2O. It catalyses the reaction (11Z,14Z,17Z)-eicosatrienoyl-CoA + 2 Fe(II)-[cytochrome b5] + O2 + 2 H(+) = (8Z,11Z,14Z,17Z)-eicosatetraenoyl-CoA + 2 Fe(III)-[cytochrome b5] + 2 H2O. The protein operates within lipid metabolism; polyunsaturated fatty acid biosynthesis. In terms of biological role, involved in the biosynthesis of highly unsaturated fatty acids (HUFA) from the essential polyunsaturated fatty acids (PUFA) linoleic acid (LA) (18:2n-6) and alpha-linolenic acid (ALA) (18:3n-3) precursors, acting as a fatty acyl-coenzyme A (CoA) desaturase that introduces a cis double bond at carbon 6 of the fatty acyl chain. Catalyzes the first and rate limiting step in this pathway which is the desaturation of LA (18:2n-6) and ALA (18:3n-3) into gamma-linoleate (GLA) (18:3n-6) and stearidonate (18:4n-3), respectively. Subsequently, in the biosynthetic pathway of HUFA n-3 series, it desaturates tetracosapentaenoate (24:5n-3) to tetracosahexaenoate (24:6n-3), which is then converted to docosahexaenoate (DHA)(22:6n-3), an important lipid for nervous system function. It can also desaturate (11E)-octadecenoate (trans-vaccenoate) at carbon 6 generating (6Z,11E)-octadecadienoate. In addition to Delta-6 activity, this enzyme exhibits Delta-8 activity with slight biases toward n-3 fatty acyl-CoA substrates. In Pongo abelii (Sumatran orangutan), this protein is Acyl-CoA 6-desaturase (FADS2).